An 85-amino-acid polypeptide reads, in one-letter code: Cell division topological specificity factor (85 aa).

It belongs to the MinE family.

Functionally, prevents the cell division inhibition by proteins MinC and MinD at internal division sites while permitting inhibition at polar sites. This ensures cell division at the proper site by restricting the formation of a division septum at the midpoint of the long axis of the cell. The polypeptide is Cell division topological specificity factor (Dechloromonas aromatica (strain RCB)).